We begin with the raw amino-acid sequence, 317 residues long: tRNA dimethylallyltransferase (317 aa).

Position 14–21 (14–21 (GPTASGKT)) interacts with ATP. Residue 16 to 21 (TASGKT) participates in substrate binding. Interaction with substrate tRNA stretches follow at residues 39–42 (DSAL) and 163–167 (QRIQR).

This sequence belongs to the IPP transferase family. Monomer. The cofactor is Mg(2+).

It carries out the reaction adenosine(37) in tRNA + dimethylallyl diphosphate = N(6)-dimethylallyladenosine(37) in tRNA + diphosphate. Functionally, catalyzes the transfer of a dimethylallyl group onto the adenine at position 37 in tRNAs that read codons beginning with uridine, leading to the formation of N6-(dimethylallyl)adenosine (i(6)A). This is tRNA dimethylallyltransferase from Stenotrophomonas maltophilia (strain K279a).